The following is a 362-amino-acid chain: 3-dehydroquinate synthase (362 aa).

Residues 71–76 (DGEQYK), 105–109 (GVVGD), 129–130 (TT), Lys142, Lys151, and 169–172 (CLKT) each bind NAD(+). Zn(2+)-binding residues include Glu184, His247, and His264.

Belongs to the sugar phosphate cyclases superfamily. Dehydroquinate synthase family. Requires Co(2+) as cofactor. It depends on Zn(2+) as a cofactor. The cofactor is NAD(+).

It localises to the cytoplasm. It carries out the reaction 7-phospho-2-dehydro-3-deoxy-D-arabino-heptonate = 3-dehydroquinate + phosphate. Its pathway is metabolic intermediate biosynthesis; chorismate biosynthesis; chorismate from D-erythrose 4-phosphate and phosphoenolpyruvate: step 2/7. In terms of biological role, catalyzes the conversion of 3-deoxy-D-arabino-heptulosonate 7-phosphate (DAHP) to dehydroquinate (DHQ). The sequence is that of 3-dehydroquinate synthase from Shigella boydii serotype 18 (strain CDC 3083-94 / BS512).